A 415-amino-acid polypeptide reads, in one-letter code: Gamma-glutamyl phosphate reductase (415 aa).

The protein belongs to the gamma-glutamyl phosphate reductase family.

The protein resides in the cytoplasm. It catalyses the reaction L-glutamate 5-semialdehyde + phosphate + NADP(+) = L-glutamyl 5-phosphate + NADPH + H(+). Its pathway is amino-acid biosynthesis; L-proline biosynthesis; L-glutamate 5-semialdehyde from L-glutamate: step 2/2. In terms of biological role, catalyzes the NADPH-dependent reduction of L-glutamate 5-phosphate into L-glutamate 5-semialdehyde and phosphate. The product spontaneously undergoes cyclization to form 1-pyrroline-5-carboxylate. This chain is Gamma-glutamyl phosphate reductase, found in Mycobacterium bovis (strain BCG / Pasteur 1173P2).